A 154-amino-acid polypeptide reads, in one-letter code: Transcriptional repressor NrdR (154 aa).

A zinc finger spans residues Cys3 to Cys34. Residues Pro49–Glu139 enclose the ATP-cone domain.

This sequence belongs to the NrdR family. Zn(2+) is required as a cofactor.

Functionally, negatively regulates transcription of bacterial ribonucleotide reductase nrd genes and operons by binding to NrdR-boxes. The chain is Transcriptional repressor NrdR from Pseudomonas putida (strain W619).